A 443-amino-acid polypeptide reads, in one-letter code: Glucose-6-phosphate isomerase (443 aa).

The active-site Proton donor is the E285. Residues H306 and K420 contribute to the active site.

It belongs to the GPI family.

Its subcellular location is the cytoplasm. The catalysed reaction is alpha-D-glucose 6-phosphate = beta-D-fructose 6-phosphate. The protein operates within carbohydrate biosynthesis; gluconeogenesis. It participates in carbohydrate degradation; glycolysis; D-glyceraldehyde 3-phosphate and glycerone phosphate from D-glucose: step 2/4. In terms of biological role, catalyzes the reversible isomerization of glucose-6-phosphate to fructose-6-phosphate. The polypeptide is Glucose-6-phosphate isomerase (Staphylococcus aureus (strain bovine RF122 / ET3-1)).